The chain runs to 731 residues: Catalase-peroxidase 2 (731 aa).

A compositionally biased stretch (polar residues) spans 1–10; the sequence is MAETPNSDMS. The tract at residues 1–26 is disordered; that stretch reads MAETPNSDMSGATGGRSKRPKSNQDW. The tryptophyl-tyrosyl-methioninium (Trp-Tyr) (with M-244) cross-link spans 95–218; it reads WHSAGTYRTA…LGASVMGLIY (124 aa). Histidine 96 serves as the catalytic Proton acceptor. Positions 218-244 form a cross-link, tryptophyl-tyrosyl-methioninium (Tyr-Met) (with W-95); that stretch reads YVNPEGPDGNPDPEASAKNIRQTFDRM. Histidine 259 provides a ligand contact to heme b.

As to quaternary structure, homodimer. Heme b serves as cofactor. Formation of the three residue Trp-Tyr-Met cross-link is important for the catalase, but not the peroxidase activity of the enzyme.

It catalyses the reaction H2O2 + AH2 = A + 2 H2O. It carries out the reaction 2 H2O2 = O2 + 2 H2O. In terms of biological role, bifunctional enzyme with both catalase and broad-spectrum peroxidase activity. This Haloarcula marismortui (strain ATCC 43049 / DSM 3752 / JCM 8966 / VKM B-1809) (Halobacterium marismortui) protein is Catalase-peroxidase 2.